Here is a 1320-residue protein sequence, read N- to C-terminus: Collagen alpha-1(XX) chain (1320 aa).

The N-terminal stretch at 1-25 is a signal peptide; sequence MSLQGSYQHFCLWMFLGTTLALGQG. Positions 27–118 constitute a Fibronectin type-III 1 domain; the sequence is VSSRLRLAVL…EFVIEDLKSQ (92 aa). One can recognise a VWFA domain in the interval 177–352; it reads DIIFLVDGSW…DTLAPLLSRL (176 aa). Fibronectin type-III domains follow at residues 377 to 466, 467 to 556, 557 to 644, 646 to 735, and 740 to 831; these read TPTR…APLP, PPGP…SALG, PPRH…TQKA, SPGQ…TPSA, and PPSS…ACPA. An N-linked (GlcNAc...) asparagine glycan is attached at Asn-433. Asn-569 and Asn-604 each carry an N-linked (GlcNAc...) asparagine glycan. The tract at residues 728–752 is disordered; it reads SLRYTPSAASRSPPSSLALSSETPN. The span at 733-748 shows a compositional bias: low complexity; that stretch reads PSAASRSPPSSLALSS. N-linked (GlcNAc...) asparagine glycosylation is present at Asn-771. Positions 840–1035 constitute a Laminin G-like domain; it reads GFDLMVAFGL…LQMLQIVCSD (196 aa). Disordered stretches follow at residues 1064 to 1220 and 1291 to 1320; these read YSSE…EKGE and LRPEDQGEPVTISHTSNPRLQEVQTPESLE. Over residues 1069-1080 the composition is skewed to pro residues; sequence PGPPGPQGPPGL. Collagen-like domains follow at residues 1069 to 1122, 1125 to 1174, and 1165 to 1221; these read PGPP…TQGR, QGPM…GPAG, and GMRG…KGEP. Residues 1081-1093 are compositionally biased toward low complexity; it reads PGRNGPPGQQGHP. Positions 1106 to 1115 are enriched in gly residues; sequence GPEGPGGQQG. The segment covering 1140–1152 has biased composition (low complexity); sequence QGLSGLQGLSGQQ. The span at 1302-1320 shows a compositional bias: polar residues; sequence ISHTSNPRLQEVQTPESLE.

The protein resides in the secreted. It is found in the extracellular space. Its function is as follows. Probable collagen protein. The sequence is that of Collagen alpha-1(XX) chain (Col20a1) from Mus musculus (Mouse).